Here is a 131-residue protein sequence, read N- to C-terminus: Fumarate reductase subunit C (131 aa).

3 helical membrane-spanning segments follow: residues 30 to 50 (EGTA…LFAL), 57 to 77 (WAGF…LITL), and 109 to 129 (IIKS…FVAL).

The protein belongs to the FrdC family. Part of an enzyme complex containing four subunits: a flavoprotein (FrdA), an iron-sulfur protein (FrdB), and two hydrophobic anchor proteins (FrdC and FrdD).

The protein localises to the cell inner membrane. Two distinct, membrane-bound, FAD-containing enzymes are responsible for the catalysis of fumarate and succinate interconversion; fumarate reductase is used in anaerobic growth, and succinate dehydrogenase is used in aerobic growth. Anchors the catalytic components of the fumarate reductase complex to the cell inner membrane, binds quinones. The sequence is that of Fumarate reductase subunit C from Shigella flexneri.